A 476-amino-acid chain; its full sequence is Tubulointerstitial nephritis antigen (476 aa).

N-linked (GlcNAc...) asparagine glycosylation is present at asparagine 38. Positions 59-107 (RFGCCADRDDGCVTQFYEADALCYCDKFCERENSDCCPDYKSFCREEKG) constitute an SMB domain. Cystine bridges form between cysteine 63-cysteine 83 and cysteine 87-cysteine 94. Asparagine 175, asparagine 314, asparagine 360, and asparagine 455 each carry an N-linked (GlcNAc...) asparagine glycan.

This sequence belongs to the peptidase C1 family.

The protein resides in the secreted. Its subcellular location is the extracellular space. It is found in the extracellular matrix. It localises to the basement membrane. Functionally, mediates adhesion of proximal tubule epithelial cells via integrins alpha3-beta1 and alphaV-beta3. This is a non catalytic peptidase C1 family protein. This chain is Tubulointerstitial nephritis antigen (TINAG), found in Bos taurus (Bovine).